We begin with the raw amino-acid sequence, 619 residues long: Guanylate cyclase soluble subunit beta-1 (619 aa).

His-105 contacts heme. The 134-residue stretch at 421 to 554 (TILFSGIVGF…NTVNLTSRTE (134 aa)) folds into the Guanylate cyclase domain.

This sequence belongs to the adenylyl cyclase class-4/guanylyl cyclase family. The active enzyme is formed by a heterodimer of an alpha and a beta subunit. Heterodimer with GUCY1A1. Can also form inactive homodimers in vitro. It depends on heme as a cofactor. In terms of tissue distribution, detected in brain cortex and cerebellum (at protein level).

The protein resides in the cytoplasm. It catalyses the reaction GTP = 3',5'-cyclic GMP + diphosphate. With respect to regulation, activated by nitric oxide in the presence of magnesium or manganese ions. Its function is as follows. Mediates responses to nitric oxide (NO) by catalyzing the biosynthesis of the signaling molecule cGMP. The chain is Guanylate cyclase soluble subunit beta-1 from Homo sapiens (Human).